Here is a 130-residue protein sequence, read N- to C-terminus: Small ribosomal subunit protein uS8 (130 aa).

It belongs to the universal ribosomal protein uS8 family. As to quaternary structure, part of the 30S ribosomal subunit. Contacts proteins S5 and S12.

In terms of biological role, one of the primary rRNA binding proteins, it binds directly to 16S rRNA central domain where it helps coordinate assembly of the platform of the 30S subunit. This Shewanella piezotolerans (strain WP3 / JCM 13877) protein is Small ribosomal subunit protein uS8.